Reading from the N-terminus, the 348-residue chain is MSERTWSHLISALLNGTSLTADDTKWAMNEIMSGSATDAQIAGFAIALRAKGESVAEVRGLAQGMLDHAVTISVPGATLDIVGTGGDRAHTVNVSTMASIVASAAGARVVKHGNRAASSSCGTADVLERLGVIIDLDPADAVAVAEEVDITFCFAPLYHPSLKYAAKPRRELAVPTVFNFLGPLTNPARPTASAIGVFDRNMCEIMAGVFAERGVNALVFRGDDGLDELTTTTTSSVWIVADGSVRYEQLDPADLGIPRATPEALRGGDVEFNARVVREFLDGRPGPVRDAVLLNAAAALAAAEGVTGSLIETLRAQYQRAAEAVDSGAAKAKLDAWVESSQARAKQL.

5-phospho-alpha-D-ribose 1-diphosphate contacts are provided by residues Gly-83, 86–87 (GD), Thr-91, 93–96 (NVST), 111–119 (KHGNRAASS), and Thr-123. Gly-83 contributes to the anthranilate binding site. A Mg(2+)-binding site is contributed by Ser-95. Asn-114 is a binding site for anthranilate. Arg-169 is an anthranilate binding site. Asp-227 and Glu-228 together coordinate Mg(2+).

It belongs to the anthranilate phosphoribosyltransferase family. Homodimer. The cofactor is Mg(2+).

It catalyses the reaction N-(5-phospho-beta-D-ribosyl)anthranilate + diphosphate = 5-phospho-alpha-D-ribose 1-diphosphate + anthranilate. The protein operates within amino-acid biosynthesis; L-tryptophan biosynthesis; L-tryptophan from chorismate: step 2/5. Catalyzes the transfer of the phosphoribosyl group of 5-phosphorylribose-1-pyrophosphate (PRPP) to anthranilate to yield N-(5'-phosphoribosyl)-anthranilate (PRA). The chain is Anthranilate phosphoribosyltransferase from Thermobifida fusca (strain YX).